The following is a 611-amino-acid chain: MRATQLYAASFRPGFDSPPQLVPVALRGSAPDTTTVASAGELAVGTTDPCPAPVAQIGVADVYVPAPTSPEPEGLPQVAPVFSRGNVPDTTAVPAAAGTTVGVADPYLPPGVGHLSGFAVPSHGIVPTVPGVLAGGPPTAPVAPRNSAPVLRPEWPYHVPSVSDLDWFDAVPAGVPGGDEHNYNFLIAAPQVPRLADEHEMVDVFDIQAVRADFPILQETVNGKPLIWFDNAATTQKPQVVIDRLSYFYAHENSNIHRAAHELAARATDAYEEARETARRFIGAAKAQEIIFVRGTTEAINLVAYAWGGKHLQPGDEVVITHLEHHANIVPWQLLSSQTGAILKVAPVDDAGNLLMSEFEDLLGPRTKLVAATQVSNALGTVTQGEKIVELGHRYGARVLIDGAQSIPHLPINVSELGADFFVFSGHKIYGPTGIGVLYGCEDVLTEMPPWQGGGNMIVDVTLERSLYQGPPNKFEAGTGNIADAVGLGEALRYVERVGVQRIASHEQALLDYATPRLADIPGVRLVGTATEKASVLSFVLAGHEPLEVGKALNAEGIAVRAGHHCAQPVLRRLGLEATVRPSFAFYNTYEEIDVFINVVRRIAEGGTNIG.

Residues 1-208 (MRATQLYAAS…HEMVDVFDIQ (208 aa)) form a cargo-loading domain region. K428 carries the N6-(pyridoxal phosphate)lysine modification. Catalysis depends on C566, which acts as the Cysteine persulfide intermediate.

It belongs to the class-V pyridoxal-phosphate-dependent aminotransferase family. Csd subfamily. As to quaternary structure, there are 1-2 copies of this protein in each type 2A encapsulin shell. It depends on pyridoxal 5'-phosphate as a cofactor.

It is found in the encapsulin nanocompartment. It carries out the reaction (sulfur carrier)-H + L-cysteine = (sulfur carrier)-SH + L-alanine. Functionally, cargo protein of a type 2A encapsulin nanocompartment involved in sulfur metabolism. Cysteine desulfurases mobilize the sulfur from L-cysteine to yield L-alanine, an essential step in sulfur metabolism for biosynthesis of a variety of sulfur-containing biomolecules. This chain is Probable cysteine desulfurase 1, found in Mycobacterium leprae (strain TN).